Reading from the N-terminus, the 495-residue chain is Leucine aminopeptidase 2 (495 aa).

The signal sequence occupies residues Met-1–Gly-21. The region spanning Pro-124–Val-218 is the PA domain. N-linked (GlcNAc...) asparagine glycans are attached at residues Asn-142 and Asn-235. His-259 and Asp-271 together coordinate Zn(2+). N-linked (GlcNAc...) asparagine glycosylation occurs at Asn-272. Catalysis depends on Glu-303, which acts as the Proton acceptor. Zn(2+) is bound by residues Glu-304 and Asp-332. N-linked (GlcNAc...) asparagine glycosylation occurs at Asn-352. Position 430 (His-430) interacts with Zn(2+).

Belongs to the peptidase M28 family. M28A subfamily. As to quaternary structure, monomer. The cofactor is Zn(2+).

It localises to the secreted. Its function is as follows. Extracellular aminopeptidase that releases a wide variety of amino acids from natural peptides and contributes to pathogenicity. In Trichophyton equinum (Horse ringworm fungus), this protein is Leucine aminopeptidase 2 (LAP2).